Reading from the N-terminus, the 276-residue chain is Hemin import ATP-binding protein HmuV (276 aa).

An ABC transporter domain is found at 2-259 (LTAHHLDVAR…AHIAQCYGFA (258 aa)). 34-41 (GRNGAGKS) provides a ligand contact to ATP.

This sequence belongs to the ABC transporter superfamily. Heme (hemin) importer (TC 3.A.1.14.5) family. The complex is composed of two ATP-binding proteins (HmuV), two transmembrane proteins (HmuU) and a solute-binding protein (HmuT).

Its subcellular location is the cell inner membrane. Functionally, part of the ABC transporter complex HmuTUV involved in hemin import. Responsible for energy coupling to the transport system. The protein is Hemin import ATP-binding protein HmuV of Burkholderia cenocepacia (strain HI2424).